The primary structure comprises 380 residues: Glucose-1-phosphate adenylyltransferase (380 aa).

Alpha-D-glucose 1-phosphate contacts are provided by residues Gly-164, 179 to 180 (EK), and Ser-190.

Belongs to the bacterial/plant glucose-1-phosphate adenylyltransferase family. As to quaternary structure, homotetramer.

The catalysed reaction is alpha-D-glucose 1-phosphate + ATP + H(+) = ADP-alpha-D-glucose + diphosphate. The protein operates within glycan biosynthesis; glycogen biosynthesis. Its function is as follows. Involved in the biosynthesis of ADP-glucose, a building block required for the elongation reactions to produce glycogen. Catalyzes the reaction between ATP and alpha-D-glucose 1-phosphate (G1P) to produce pyrophosphate and ADP-Glc. This chain is Glucose-1-phosphate adenylyltransferase, found in Streptococcus pneumoniae (strain CGSP14).